Consider the following 513-residue polypeptide: Fumarate reductase (513 aa).

41 to 55 (AIVIGGGLAGLSATN) lines the FAD pocket. Ser100 bears the Phosphoserine mark. Active-site residues include His288 and Arg311.

This sequence belongs to the FAD-dependent oxidoreductase 2 family. FRD/SDH subfamily. Requires FAD as cofactor.

The protein localises to the cytoplasm. Its subcellular location is the mitochondrion. It localises to the nucleus. It catalyses the reaction succinate + NAD(+) = fumarate + NADH + H(+). In terms of biological role, irreversibly catalyzes the reduction of fumarate to succinate. The protein is Fumarate reductase (osm1) of Schizosaccharomyces pombe (strain 972 / ATCC 24843) (Fission yeast).